Here is an 87-residue protein sequence, read N- to C-terminus: Small ribosomal subunit protein uS17 (87 aa).

The protein belongs to the universal ribosomal protein uS17 family. Part of the 30S ribosomal subunit.

One of the primary rRNA binding proteins, it binds specifically to the 5'-end of 16S ribosomal RNA. This is Small ribosomal subunit protein uS17 from Bacillus cereus (strain ATCC 14579 / DSM 31 / CCUG 7414 / JCM 2152 / NBRC 15305 / NCIMB 9373 / NCTC 2599 / NRRL B-3711).